A 479-amino-acid polypeptide reads, in one-letter code: Adenosylhomocysteinase (479 aa).

Residues Thr56, Asp134, and Glu200 each coordinate substrate. Position 201-203 (201-203 (TTT)) interacts with NAD(+). Residues Lys230 and Asp234 each coordinate substrate. NAD(+)-binding positions include Asn235, 264–269 (GYGDVG), Glu287, Asn322, 343–345 (IGH), and Asn391.

This sequence belongs to the adenosylhomocysteinase family. As to quaternary structure, homotetramer. NAD(+) is required as a cofactor.

It carries out the reaction S-adenosyl-L-homocysteine + H2O = L-homocysteine + adenosine. The protein operates within amino-acid biosynthesis; L-homocysteine biosynthesis; L-homocysteine from S-adenosyl-L-homocysteine: step 1/1. Its function is as follows. Adenosylhomocysteine is a competitive inhibitor of S-adenosyl-L-methionine-dependent methyl transferase reactions; therefore adenosylhomocysteinase may play a key role in the control of methylations via regulation of the intracellular concentration of adenosylhomocysteine. The protein is Adenosylhomocysteinase of Plasmodium falciparum (isolate 3D7).